Consider the following 588-residue polypeptide: Phenol 2-monooxygenase fsqG (588 aa).

Residues 9–38 (DVLI…LIDW), 17–18 (PA), 37–39 (DWK), 45–50 (TGRADG), Tyr232, 289–299 (ARHNRIFLAGD), Asp299, and 309–313 (GQGMN) contribute to the FAD site. 2 residues coordinate substrate: Asp49 and Tyr232.

Belongs to the PheA/TfdB FAD monooxygenase family. Homodimer. The cofactor is FAD.

It participates in secondary metabolite biosynthesis. Functionally, phenol 2-monooxygenase; part of the gene cluster that mediates the biosynthesis of the isoquinoline alkaloids fumisoquin A, fumisoquin B and fumisoquin C; as well as small amounts of fumipyrrole as a shunt metabolite. The products of the cluster lead to a brown coloration and are important for growth and conidiation. The nonribosomal peptide synthetase-like protein fsqF, which lacks a canonical condensation domain, is required for addition of a serine-derived dehydroalanine moiety to activated tyrosine but is not essential for the subsequent steps leading to isoquinoline formation. A different enzyme, most likely the ATP-grasp enzyme fsqD, is responsible for activation of tyrosine. Three additional enzymes encoded by the fsq cluster, the N-methyltransferase fsqC, the phenol 2-monooxygenase fsqG and the FAD-dependent oxidase fsqB, catalyze the formation of the isoquinoline ring system in the fumisoquins. FsqB converts the fspF thiolation domain-bound (2S,4S,5S)-2-amino-6-(3,4-dihydroxyphenyl)-4-hydroxy-5-(methylamino)hexanoyl into isoquinoline. The cyclization most likely proceeds via a two-step mechanism, beginning with FAD-dependent oxidation of the methyl group to an iminium species followed by electrophilic attack on the deprotonated phenol. The polypeptide is Phenol 2-monooxygenase fsqG (Aspergillus fumigatus (strain ATCC MYA-4609 / CBS 101355 / FGSC A1100 / Af293) (Neosartorya fumigata)).